The primary structure comprises 252 residues: 3-dehydroquinate dehydratase (252 aa).

3-dehydroquinate-binding positions include Ser21, 46 to 48, and Arg82; that span reads EWR. The Proton donor/acceptor role is filled by His143. Lys170 (schiff-base intermediate with substrate) is an active-site residue. 3-dehydroquinate is bound by residues Arg213, Ser232, and Gln236.

It belongs to the type-I 3-dehydroquinase family. In terms of assembly, homodimer.

The catalysed reaction is 3-dehydroquinate = 3-dehydroshikimate + H2O. It functions in the pathway metabolic intermediate biosynthesis; chorismate biosynthesis; chorismate from D-erythrose 4-phosphate and phosphoenolpyruvate: step 3/7. Its function is as follows. Involved in the third step of the chorismate pathway, which leads to the biosynthesis of aromatic amino acids. Catalyzes the cis-dehydration of 3-dehydroquinate (DHQ) and introduces the first double bond of the aromatic ring to yield 3-dehydroshikimate. This Escherichia coli O8 (strain IAI1) protein is 3-dehydroquinate dehydratase.